A 276-amino-acid polypeptide reads, in one-letter code: ATP synthase subunit a 2 (276 aa).

5 consecutive transmembrane segments (helical) span residues 45–65, 105–125, 154–173, 226–246, and 247–267; these read AVHV…VWLF, VIAP…LMDL, VNVT…YYSI, LLFI…SVPW, and AIFH…LTIV.

The protein belongs to the ATPase A chain family. In terms of assembly, F-type ATPases have 2 components, CF(1) - the catalytic core - and CF(0) - the membrane proton channel. CF(1) has five subunits: alpha(3), beta(3), gamma(1), delta(1), epsilon(1). CF(0) has three main subunits: a(1), b(2) and c(9-12). The alpha and beta chains form an alternating ring which encloses part of the gamma chain. CF(1) is attached to CF(0) by a central stalk formed by the gamma and epsilon chains, while a peripheral stalk is formed by the delta and b chains.

The protein localises to the cell inner membrane. Key component of the proton channel; it plays a direct role in the translocation of protons across the membrane. The chain is ATP synthase subunit a 2 from Hahella chejuensis (strain KCTC 2396).